Consider the following 331-residue polypeptide: DNA-directed RNA polymerase subunit alpha (331 aa).

An alpha N-terminal domain (alpha-NTD) region spans residues 1-237; that stretch reads MQSFEKEFLK…DQLSSFIDLK (237 aa). The tract at residues 251–331 is alpha C-terminal domain (alpha-CTD); sequence FDPSLLNLVD…NWPPKHLSEQ (81 aa).

This sequence belongs to the RNA polymerase alpha chain family. Homodimer. The RNAP catalytic core consists of 2 alpha, 1 beta, 1 beta' and 1 omega subunit. When a sigma factor is associated with the core the holoenzyme is formed, which can initiate transcription.

It catalyses the reaction RNA(n) + a ribonucleoside 5'-triphosphate = RNA(n+1) + diphosphate. Functionally, DNA-dependent RNA polymerase catalyzes the transcription of DNA into RNA using the four ribonucleoside triphosphates as substrates. The protein is DNA-directed RNA polymerase subunit alpha of Blochmanniella floridana.